Here is a 140-residue protein sequence, read N- to C-terminus: Ribosomal RNA large subunit methyltransferase H (140 aa).

S-adenosyl-L-methionine contacts are provided by Leu55 and Gly87.

It belongs to the RNA methyltransferase RlmH family. As to quaternary structure, homodimer.

Its subcellular location is the cytoplasm. It catalyses the reaction pseudouridine(1915) in 23S rRNA + S-adenosyl-L-methionine = N(3)-methylpseudouridine(1915) in 23S rRNA + S-adenosyl-L-homocysteine + H(+). Its function is as follows. Specifically methylates the pseudouridine at position 1915 (m3Psi1915) in 23S rRNA. The chain is Ribosomal RNA large subunit methyltransferase H from Erythrobacter litoralis (strain HTCC2594).